Here is a 479-residue protein sequence, read N- to C-terminus: ESX-1 secretion system ATPase EccB1 (479 aa).

The Cytoplasmic segment spans residues 1–44; sequence MAGFRLTTKVQVSGWRFLLRRVEHAIVRRDTRMFDDPLQFYSRA. A helical transmembrane segment spans residues 45–65; sequence VFAGVVVSVLICLGAALMAYF. Residues 66–479 lie on the Periplasmic side of the membrane; the sequence is KPLGKQGSDQ…NPRKVASGEG (414 aa). C152 and C347 are disulfide-bonded.

This sequence belongs to the EccB family. Part of the ESX-1 / type VII secretion system (T7SS), which is composed of cytosolic and membrane components. The ESX-1 membrane complex is composed of EccB1, EccCa1, EccCb1, EccD1 and EccE1.

Its subcellular location is the cell inner membrane. An ATPase. Part of the ESX-1 / type VII specialized secretion system (T7SS), which exports several proteins including EsxA and EsxB. Plays a role in DNA conjugation, in both donor and recipient strains. This is ESX-1 secretion system ATPase EccB1 from Mycolicibacterium smegmatis (strain MKD8) (Mycobacterium smegmatis).